A 514-amino-acid polypeptide reads, in one-letter code: UDP-N-acetylmuramyl-tripeptide synthetase (514 aa).

UDP-N-acetyl-alpha-D-muramoyl-L-alanyl-D-glutamate is bound by residues leucine 44 and serine 46. An ATP-binding site is contributed by 129 to 135 (GTNGKTS). Residues 171–172 (TT), serine 198, and arginine 206 each bind UDP-N-acetyl-alpha-D-muramoyl-L-alanyl-D-glutamate. An N6-carboxylysine modification is found at lysine 238.

The protein belongs to the MurCDEF family. MurE subfamily. Post-translationally, carboxylation is probably crucial for Mg(2+) binding and, consequently, for the gamma-phosphate positioning of ATP.

The protein resides in the cytoplasm. It functions in the pathway cell wall biogenesis; peptidoglycan biosynthesis. In terms of biological role, catalyzes the addition of an amino acid to the nucleotide precursor UDP-N-acetylmuramoyl-L-alanyl-D-glutamate (UMAG) in the biosynthesis of bacterial cell-wall peptidoglycan. This is UDP-N-acetylmuramyl-tripeptide synthetase from Leifsonia xyli subsp. xyli (strain CTCB07).